We begin with the raw amino-acid sequence, 357 residues long: Membrane-bound lytic murein transglycosylase C (357 aa).

The first 15 residues, 1–15 (MKKYLLLALLPFLYA), serve as a signal peptide directing secretion. Cysteine 16 is lipidated: N-palmitoyl cysteine. The S-diacylglycerol cysteine moiety is linked to residue cysteine 16.

This sequence belongs to the transglycosylase Slt family.

It is found in the cell outer membrane. The enzyme catalyses Exolytic cleavage of the (1-&gt;4)-beta-glycosidic linkage between N-acetylmuramic acid (MurNAc) and N-acetylglucosamine (GlcNAc) residues in peptidoglycan, from either the reducing or the non-reducing ends of the peptidoglycan chains, with concomitant formation of a 1,6-anhydrobond in the MurNAc residue.. Murein-degrading enzyme. May play a role in recycling of muropeptides during cell elongation and/or cell division. The chain is Membrane-bound lytic murein transglycosylase C from Haemophilus influenzae (strain PittGG).